The sequence spans 61 residues: DNA-directed RNA polymerase subunit Rpo6 (61 aa).

This sequence belongs to the archaeal Rpo6/eukaryotic RPB6 RNA polymerase subunit family. In terms of assembly, part of the RNA polymerase complex.

It is found in the cytoplasm. It carries out the reaction RNA(n) + a ribonucleoside 5'-triphosphate = RNA(n+1) + diphosphate. Functionally, DNA-dependent RNA polymerase (RNAP) catalyzes the transcription of DNA into RNA using the four ribonucleoside triphosphates as substrates. The chain is DNA-directed RNA polymerase subunit Rpo6 from Thermoplasma volcanium (strain ATCC 51530 / DSM 4299 / JCM 9571 / NBRC 15438 / GSS1).